Here is a 600-residue protein sequence, read N- to C-terminus: Elongation factor 4 (600 aa).

In terms of domain architecture, tr-type G spans 5-187 (SNIRNFSIIA…ALVERIPAPT (183 aa)). Residues 17–22 (DHGKST) and 134–137 (NKID) each bind GTP.

This sequence belongs to the TRAFAC class translation factor GTPase superfamily. Classic translation factor GTPase family. LepA subfamily.

It is found in the cell inner membrane. The enzyme catalyses GTP + H2O = GDP + phosphate + H(+). Its function is as follows. Required for accurate and efficient protein synthesis under certain stress conditions. May act as a fidelity factor of the translation reaction, by catalyzing a one-codon backward translocation of tRNAs on improperly translocated ribosomes. Back-translocation proceeds from a post-translocation (POST) complex to a pre-translocation (PRE) complex, thus giving elongation factor G a second chance to translocate the tRNAs correctly. Binds to ribosomes in a GTP-dependent manner. The polypeptide is Elongation factor 4 (Psychrobacter sp. (strain PRwf-1)).